Consider the following 119-residue polypeptide: Phospholipase A2 A2-actitoxin-Cgg2a (119 aa).

Intrachain disulfides connect cysteine 25–cysteine 119, cysteine 27–cysteine 43, cysteine 42–cysteine 101, cysteine 49–cysteine 94, cysteine 61–cysteine 87, and cysteine 78–cysteine 92. Ca(2+) is bound by residues glycine 28 and glycine 30. Residue histidine 46 is part of the active site. Aspartate 47 contributes to the Ca(2+) binding site. The active site involves aspartate 95.

The protein belongs to the phospholipase A2 family. In terms of assembly, homodimer. The cofactor is Ca(2+).

It is found in the secreted. It localises to the nematocyst. It catalyses the reaction a 1,2-diacyl-sn-glycero-3-phosphocholine + H2O = a 1-acyl-sn-glycero-3-phosphocholine + a fatty acid + H(+). Sea anemone phospholipase A2 (PLA2). When incubated with plasma, this protein shows a moderate anticoagulant activity (0.15 ug of enzyme/200 uL of plasma), inhibiting clotting induced by thrombin. This enzyme also induces myotoxicity, and edema. PLA2 catalyzes the calcium-dependent hydrolysis of the 2-acyl groups in 3-sn-phosphoglycerides. In Condylactis gigantea (Giant Caribbean anemone), this protein is Phospholipase A2 A2-actitoxin-Cgg2a.